We begin with the raw amino-acid sequence, 220 residues long: Cytidylate kinase (220 aa).

Residue 10–18 participates in ATP binding; that stretch reads GPAGAGKST.

This sequence belongs to the cytidylate kinase family. Type 1 subfamily.

It is found in the cytoplasm. It carries out the reaction CMP + ATP = CDP + ADP. The enzyme catalyses dCMP + ATP = dCDP + ADP. The sequence is that of Cytidylate kinase from Alkaliphilus metalliredigens (strain QYMF).